We begin with the raw amino-acid sequence, 284 residues long: Tropomyosin (284 aa).

Residues 1 to 284 (MDAIKKKMLA…DQTFAELAGY (284 aa)) are a coiled coil. Over residues 202–213 (NNTKSLEISEQE) the composition is skewed to polar residues. The disordered stretch occupies residues 202-223 (NNTKSLEISEQEASQREDSYEE). Positions 214–223 (ASQREDSYEE) are enriched in basic and acidic residues.

The protein belongs to the tropomyosin family. In terms of assembly, homodimer.

Tropomyosin, in association with the troponin complex, plays a central role in the calcium dependent regulation of muscle contraction. The polypeptide is Tropomyosin (Haliotis rufescens (California red abalone)).